A 410-amino-acid polypeptide reads, in one-letter code: Regulator of microtubule dynamics protein 2 (410 aa).

The chain crosses the membrane as a helical span at residues 10-27 (IFGIMVGTAGISLLLLWY). The residue at position 51 (Ser51) is a Phosphoserine. The stretch at 68-110 (FQERQLQILEKLNELLTNMEELKEEIRFLKETVPKLEEYIQDE) forms a coiled coil. Residue Ser121 is modified to Phosphoserine. Basic residues predominate over residues 122-131 (PQHRARKRRL). The interval 122 to 151 (PQHRARKRRLPTIQSSATSNSSEEAESEGG) is disordered. Phosphothreonine is present on Thr139. Tyr152 is modified (phosphotyrosine). Phosphothreonine occurs at positions 154 and 157.

This sequence belongs to the RMDN family. Interacts with microtubules.

The protein localises to the membrane. It is found in the cytoplasm. It localises to the cytoskeleton. Its subcellular location is the spindle. The protein resides in the spindle pole. This is Regulator of microtubule dynamics protein 2 (RMDN2) from Macaca fascicularis (Crab-eating macaque).